We begin with the raw amino-acid sequence, 311 residues long: Glutaminase (311 aa).

Positions 66, 116, 162, 169, 193, 245, and 263 each coordinate substrate.

It belongs to the glutaminase family. As to quaternary structure, homotetramer.

It carries out the reaction L-glutamine + H2O = L-glutamate + NH4(+). The polypeptide is Glutaminase (Rhodopseudomonas palustris (strain TIE-1)).